We begin with the raw amino-acid sequence, 479 residues long: GMP reductase (479 aa).

2 CBS domains span residues 96 to 153 (VLDT…VRDI) and 154 to 212 (AVTD…ATDS). Residues 246-248 (DTA) and 296-298 (GVG) contribute to the NADP(+) site. Cysteine 303 functions as the Thioimidate intermediate in the catalytic mechanism.

The protein belongs to the IMPDH/GMPR family. GuaB1 subfamily. Requires a monovalent cation as cofactor.

The enzyme catalyses IMP + NH4(+) + NADP(+) = GMP + NADPH + 2 H(+). It functions in the pathway purine metabolism; IMP biosynthesis via salvage pathway. In terms of biological role, involved in the purine-salvage pathway. Catalyzes the NADPH-dependent conversion of GMP to IMP. The polypeptide is GMP reductase (Mycobacterium bovis (strain ATCC BAA-935 / AF2122/97)).